Here is a 247-residue protein sequence, read N- to C-terminus: Phosphoglycerate mutase 1 (247 aa).

Substrate contacts are provided by residues 8–15 (RHGQSEWN) and 21–22 (TG). Catalysis depends on His9, which acts as the Tele-phosphohistidine intermediate. Ser12 carries the post-translational modification Phosphoserine. A Glycyl lysine isopeptide (Lys-Gly) (interchain with G-Cter in ubiquitin) cross-link involves residue Lys31. Residue Tyr49 is modified to Phosphotyrosine. Lys57 participates in a covalent cross-link: Glycyl lysine isopeptide (Lys-Gly) (interchain with G-Cter in ubiquitin). Arg60 serves as a coordination point for substrate. Residue Lys71 forms a Glycyl lysine isopeptide (Lys-Gly) (interchain with G-Cter in ubiquitin) linkage. The active-site Proton donor/acceptor is Glu87. Substrate is bound by residues 87–90 (ERHY), Lys98, and 114–115 (RR). Phosphoserine occurs at positions 116, 127, and 128. Glycyl lysine isopeptide (Lys-Gly) (interchain with G-Cter in ubiquitin) cross-links involve residues Lys139 and Lys175. Residue 183-184 (GN) coordinates substrate. Ser185 carries the phosphoserine modification. Residue Lys191 forms a Glycyl lysine isopeptide (Lys-Gly) (interchain with G-Cter in ubiquitin) linkage. At Ser197 the chain carries Phosphoserine.

Belongs to the phosphoglycerate mutase family. BPG-dependent PGAM subfamily. Homotetramer: dimer of dimers.

It is found in the cytoplasm. Its subcellular location is the mitochondrion outer membrane. It localises to the mitochondrion intermembrane space. The catalysed reaction is (2R)-2-phosphoglycerate = (2R)-3-phosphoglycerate. It participates in carbohydrate degradation; glycolysis; pyruvate from D-glyceraldehyde 3-phosphate: step 3/5. With respect to regulation, inhibited by inositol hexakisphosphate and benzene tri-, tetra- and hexacarboxylates. Functionally, interconversion of 3- and 2-phosphoglycerate with 2,3-bisphosphoglycerate as the primer of the reaction. Can also catalyze the reaction of EC 5.4.2.4 (synthase), but with a reduced activity. This Saccharomyces cerevisiae (strain ATCC 204508 / S288c) (Baker's yeast) protein is Phosphoglycerate mutase 1 (GPM1).